A 304-amino-acid chain; its full sequence is Tegument protein VP22 (304 aa).

Disordered regions lie at residues 23-68 (YSTV…PNDD) and 112-184 (STSN…GTPK). Residues 43–58 (RENDLYDKQSVSKEND) show a composition bias toward basic and acidic residues. Positions 123–142 (AQPPPRGAAAAPPPRVPTRP) are enriched in pro residues. Residues 143–154 (PTRAAATSTTPR) are compositionally biased toward low complexity. Residues 160–163 (PKQR) carry the Nuclear localization signal motif. A Nuclear export signal motif is present at residues 233–245 (LDRFLKAAAIRIL). The interval 262–304 (STPDGYAAAGPNGYDRRPRTASRRRSLKCKPPADDFFDDTNSG) is disordered. Positions 280 to 289 (RTASRRRSLK) are enriched in basic residues.

The protein belongs to the alphaherpesvirinae VP22 tegument protein family. In terms of assembly, interacts with gE (via C-terminus); this interaction is necessary for the recruitment of VP22 to the Golgi and its packaging into virions. Interacts with gM (via C-terminus). Interacts with VP16; this interaction allows the formation of a tripartite complex composed of VP16, VP22 and UL41/VHS. Interacts with the capsid-binding protein UL16. Interacts with host CGAS. Post-translationally, highly phosphorylated in the host cell. Packaging is selective for underphosphorylated forms.

It is found in the virion tegument. Its subcellular location is the host cytoplasm. The protein localises to the host nucleus. It localises to the host Golgi apparatus. In terms of biological role, tegument protein that plays different roles during the time course of infection. Participates in both the accumulation of viral mRNAs and viral protein translation at late time of infection. Modulates the RNase activity of the virion host shutoff protein UL41 probably to ensure necessary levels of key cellular mRNAs and proteins. Plays a role in microtubule reorganization that occurs after viral infection by stabilizing microtubule network. Plays a role in the inhibition of host innate immune system by targeting the CGAS enzymatic activity which is the principal cytosolic DNA sensor that detects invading viral DNA. Acts by mediating disruption of liquid-like droplets in which CGAS is activated, thereby preventing CGAS activity. This Equine herpesvirus 1 (strain Ab4p) (EHV-1) protein is Tegument protein VP22.